Here is a 513-residue protein sequence, read N- to C-terminus: OBERON-like protein (513 aa).

The segment at 166-235 (NGFCNLCMCV…VFRCQACSXT (70 aa)) adopts a PHD-type zinc-finger fold. Residues 372–469 (RELADKAREA…LYEKIKLQES (98 aa)) adopt a coiled-coil conformation. Residues 493 to 513 (YNGPPKADSQSNDCHPFRTNP) form a disordered region. Residues 500-513 (DSQSNDCHPFRTNP) are compositionally biased toward polar residues.

As to quaternary structure, self-interacts and probably forms heteromers. Binds to VPg of pea seed borne mosaic virus (PSbMV), turnip mosaic virus (TuMV) and lettuce mosaic virus (LMV), but not with VPg of tobacco etch virus (TEV), cowpea mosaic virus (CPMV), tomato black ring virus (TBRV) and grapevine fan leaf virus (GFLV).

It localises to the nucleus. In terms of biological role, required for the maintenance and/or establishment of both the shoot and root meristems, probably by controlling the expression of the meristem genes and of genes required for auxin responses. Involved in the development of the basal pole and in auxin-mediated root and vascular development in the embryo. Confers sensitivity to turnip mosaic virus (TuMV) probably by promoting viral movement and multiplication via interaction with TuMV VPg. This is OBERON-like protein (PVIP) from Pisum sativum (Garden pea).